A 296-amino-acid chain; its full sequence is GTPase Era (296 aa).

The Era-type G domain occupies 7 to 173 (KAGFVSIIGR…VDLVREHLPE (167 aa)). The G1 stretch occupies residues 15–22 (GRPNVGKS). Residue 15–22 (GRPNVGKS) coordinates GTP. The tract at residues 41–45 (QTTRN) is G2. The tract at residues 62–65 (DTPG) is G3. Residues 62–66 (DTPGI) and 122–125 (NKID) contribute to the GTP site. Residues 122-125 (NKID) are G4. A G5 region spans residues 152-154 (ISA). Positions 204 to 281 (TNREVPYGTA…YLELFVQVQE (78 aa)) constitute a KH type-2 domain.

Belongs to the TRAFAC class TrmE-Era-EngA-EngB-Septin-like GTPase superfamily. Era GTPase family. In terms of assembly, monomer.

It localises to the cytoplasm. The protein resides in the cell inner membrane. Its function is as follows. An essential GTPase that binds both GDP and GTP, with rapid nucleotide exchange. Plays a role in 16S rRNA processing and 30S ribosomal subunit biogenesis and possibly also in cell cycle regulation and energy metabolism. The protein is GTPase Era of Trichlorobacter lovleyi (strain ATCC BAA-1151 / DSM 17278 / SZ) (Geobacter lovleyi).